The chain runs to 164 residues: CB1 cannabinoid receptor-interacting protein 1 (164 aa).

The protein belongs to the CNRIP family. In terms of assembly, interacts with the cannabinoid receptor CNR1 (via C-terminus). Does not interact with cannabinoid receptor CNR2. As to expression, highly expressed in brain. Also detected in heart, lung, intestine, kidney, testis, spleen, liver and muscle (at protein level).

Functionally, suppresses cannabinoid receptor CNR1-mediated tonic inhibition of voltage-gated calcium channels. The polypeptide is CB1 cannabinoid receptor-interacting protein 1 (Cnrip1) (Mus musculus (Mouse)).